A 268-amino-acid polypeptide reads, in one-letter code: Tryptophan synthase alpha chain (268 aa).

Catalysis depends on proton acceptor residues E49 and D60.

Belongs to the TrpA family. Tetramer of two alpha and two beta chains.

It catalyses the reaction (1S,2R)-1-C-(indol-3-yl)glycerol 3-phosphate + L-serine = D-glyceraldehyde 3-phosphate + L-tryptophan + H2O. It participates in amino-acid biosynthesis; L-tryptophan biosynthesis; L-tryptophan from chorismate: step 5/5. Its function is as follows. The alpha subunit is responsible for the aldol cleavage of indoleglycerol phosphate to indole and glyceraldehyde 3-phosphate. In Shigella boydii serotype 18 (strain CDC 3083-94 / BS512), this protein is Tryptophan synthase alpha chain.